A 454-amino-acid chain; its full sequence is CCA-adding enzyme (454 aa).

ATP-binding residues include Ser59 and Arg62. The CTP site is built by Ser59 and Arg62. Asp71, Asp73, and Asp125 together coordinate Mg(2+). ATP is bound by residues His148, Lys167, and Tyr176. 3 residues coordinate CTP: His148, Lys167, and Tyr176.

It belongs to the tRNA nucleotidyltransferase/poly(A) polymerase family. Archaeal CCA-adding enzyme subfamily. As to quaternary structure, homodimer. The cofactor is Mg(2+).

It carries out the reaction a tRNA precursor + 2 CTP + ATP = a tRNA with a 3' CCA end + 3 diphosphate. The enzyme catalyses a tRNA with a 3' CCA end + 2 CTP + ATP = a tRNA with a 3' CCACCA end + 3 diphosphate. Functionally, catalyzes the addition and repair of the essential 3'-terminal CCA sequence in tRNAs without using a nucleic acid template. Adds these three nucleotides in the order of C, C, and A to the tRNA nucleotide-73, using CTP and ATP as substrates and producing inorganic pyrophosphate. tRNA 3'-terminal CCA addition is required both for tRNA processing and repair. Also involved in tRNA surveillance by mediating tandem CCA addition to generate a CCACCA at the 3' terminus of unstable tRNAs. While stable tRNAs receive only 3'-terminal CCA, unstable tRNAs are marked with CCACCA and rapidly degraded. The sequence is that of CCA-adding enzyme from Methanosarcina mazei (strain ATCC BAA-159 / DSM 3647 / Goe1 / Go1 / JCM 11833 / OCM 88) (Methanosarcina frisia).